The sequence spans 500 residues: Glycogen synthase (500 aa).

Position 20 (Lys-20) interacts with ADP-alpha-D-glucose.

The protein belongs to the glycosyltransferase 1 family. Bacterial/plant glycogen synthase subfamily.

The enzyme catalyses [(1-&gt;4)-alpha-D-glucosyl](n) + ADP-alpha-D-glucose = [(1-&gt;4)-alpha-D-glucosyl](n+1) + ADP + H(+). It participates in glycan biosynthesis; glycogen biosynthesis. Synthesizes alpha-1,4-glucan chains using ADP-glucose. The protein is Glycogen synthase of Desulforudis audaxviator (strain MP104C).